A 343-amino-acid chain; its full sequence is Aspartate-semialdehyde dehydrogenase (343 aa).

NADP(+)-binding positions include 13–16 (TGAV) and 41–42 (KS). Arginine 103 provides a ligand contact to phosphate. The Acyl-thioester intermediate role is filled by cysteine 134. Glutamine 161 serves as a coordination point for substrate. 164 to 165 (SG) is a binding site for NADP(+). Residue lysine 220 coordinates phosphate. A substrate-binding site is contributed by arginine 241. Histidine 248 (proton acceptor) is an active-site residue. Residue glutamine 321 coordinates NADP(+).

The protein belongs to the aspartate-semialdehyde dehydrogenase family. In terms of assembly, homodimer.

The enzyme catalyses L-aspartate 4-semialdehyde + phosphate + NADP(+) = 4-phospho-L-aspartate + NADPH + H(+). It participates in amino-acid biosynthesis; L-lysine biosynthesis via DAP pathway; (S)-tetrahydrodipicolinate from L-aspartate: step 2/4. It functions in the pathway amino-acid biosynthesis; L-methionine biosynthesis via de novo pathway; L-homoserine from L-aspartate: step 2/3. Its pathway is amino-acid biosynthesis; L-threonine biosynthesis; L-threonine from L-aspartate: step 2/5. Catalyzes the NADPH-dependent formation of L-aspartate-semialdehyde (L-ASA) by the reductive dephosphorylation of L-aspartyl-4-phosphate. This chain is Aspartate-semialdehyde dehydrogenase, found in Campylobacter jejuni subsp. jejuni serotype O:2 (strain ATCC 700819 / NCTC 11168).